The chain runs to 298 residues: Biphenyl-2,3-diol 1,2-dioxygenase (298 aa).

2 consecutive VOC domains span residues S5 to G119 and G143 to S264. Residues H146, H210, and E260 each contribute to the Fe cation site.

It belongs to the extradiol ring-cleavage dioxygenase family. In terms of assembly, homooctamer. The enzyme is composed of two planar tetramers rotated at 45 degrees relative to each other, with a channel in the middle. Requires Fe(2+) as cofactor.

It carries out the reaction biphenyl-2,3-diol + O2 = 2-hydroxy-6-oxo-6-phenylhexa-2,4-dienoate + H(+). Its pathway is xenobiotic degradation; biphenyl degradation; 2-hydroxy-2,4-pentadienoate and benzoate from biphenyl: step 3/4. Its function is as follows. Shows a preference for catechols with groups immediately adjacent to the hydroxyl substituents. In Paraburkholderia xenovorans (strain LB400), this protein is Biphenyl-2,3-diol 1,2-dioxygenase (bphC).